The chain runs to 485 residues: Glutamyl-tRNA(Gln) amidotransferase subunit A (485 aa).

Residues Lys-78 and Ser-153 each act as charge relay system in the active site. Catalysis depends on Ser-177, which acts as the Acyl-ester intermediate.

Belongs to the amidase family. GatA subfamily. Heterotrimer of A, B and C subunits.

The enzyme catalyses L-glutamyl-tRNA(Gln) + L-glutamine + ATP + H2O = L-glutaminyl-tRNA(Gln) + L-glutamate + ADP + phosphate + H(+). Its function is as follows. Allows the formation of correctly charged Gln-tRNA(Gln) through the transamidation of misacylated Glu-tRNA(Gln) in organisms which lack glutaminyl-tRNA synthetase. The reaction takes place in the presence of glutamine and ATP through an activated gamma-phospho-Glu-tRNA(Gln). In Desulfotalea psychrophila (strain LSv54 / DSM 12343), this protein is Glutamyl-tRNA(Gln) amidotransferase subunit A.